The chain runs to 415 residues: Very late expression factor 1 (415 aa).

The Tyr recombinase domain occupies 171–357; sequence REIINTILDC…DESDDNDEDD (187 aa). Active-site residues include R214, K242, R307, and H330. The segment at 339–415 is disordered; that stretch reads YLNKYDVGVD…GDDADLLSFN (77 aa). Y343 (O-(3'-phospho-DNA)-tyrosine intermediate) is an active-site residue. Positions 346–363 are enriched in acidic residues; that stretch reads GVDESDDNDEDDDDDEND. Positions 375–404 are enriched in low complexity; sequence NISNYDINNSSSGNSSSNNTSGNDFNNNIS.

It belongs to the 'phage' integrase family.

Involved in very late gene activation. The chain is Very late expression factor 1 (VLF-1) from Heliothis zea nuclear polyhedrosis virus (HzSNPV).